The primary structure comprises 304 residues: Fluoroacetate dehalogenase (304 aa).

Residues 26-151 (PALLLLHGFP…FVARAYWHWY (126 aa)) form the AB hydrolase-1 domain. Aspartate 104 serves as the catalytic Nucleophile. Fluoroacetate is bound by residues arginine 105, arginine 108, histidine 149, tryptophan 150, and tyrosine 212. Histidine 271 serves as the catalytic Proton acceptor.

This sequence belongs to the AB hydrolase superfamily. Epoxide hydrolase family. As to quaternary structure, homodimer.

It carries out the reaction a haloacetate + H2O = a halide anion + glycolate + H(+). The enzyme catalyses fluoroacetate + H2O = fluoride + glycolate + H(+). In terms of biological role, catalyzes the hydrolytic defluorination of fluoroacetate to produce glycolate. Has only very low activity towards chloroacetate and bromoacetate. The protein is Fluoroacetate dehalogenase (fac-dex) of Burkholderia sp.